Reading from the N-terminus, the 471-residue chain is tRNA(Ile)-lysidine synthase (471 aa).

27-32 is an ATP binding site; the sequence is SGGPDS.

This sequence belongs to the tRNA(Ile)-lysidine synthase family.

The protein localises to the cytoplasm. The catalysed reaction is cytidine(34) in tRNA(Ile2) + L-lysine + ATP = lysidine(34) in tRNA(Ile2) + AMP + diphosphate + H(+). Its function is as follows. Ligates lysine onto the cytidine present at position 34 of the AUA codon-specific tRNA(Ile) that contains the anticodon CAU, in an ATP-dependent manner. Cytidine is converted to lysidine, thus changing the amino acid specificity of the tRNA from methionine to isoleucine. The protein is tRNA(Ile)-lysidine synthase of Dehalococcoides mccartyi (strain CBDB1).